The following is a 144-amino-acid chain: Large ribosomal subunit protein uL11 (144 aa).

This sequence belongs to the universal ribosomal protein uL11 family. In terms of assembly, part of the ribosomal stalk of the 50S ribosomal subunit. Interacts with L10 and the large rRNA to form the base of the stalk. L10 forms an elongated spine to which L12 dimers bind in a sequential fashion forming a multimeric L10(L12)X complex. In terms of processing, one or more lysine residues are methylated.

In terms of biological role, forms part of the ribosomal stalk which helps the ribosome interact with GTP-bound translation factors. The polypeptide is Large ribosomal subunit protein uL11 (Neisseria meningitidis serogroup A / serotype 4A (strain DSM 15465 / Z2491)).